Consider the following 220-residue polypeptide: Large ribosomal subunit protein uL3 (220 aa).

Residues 113–143 (GTTKGHGYQGNIHKDGQRRGPMAHGSRYHRR) form a disordered region.

Belongs to the universal ribosomal protein uL3 family. In terms of assembly, part of the 50S ribosomal subunit. Forms a cluster with proteins L14 and L19.

Its function is as follows. One of the primary rRNA binding proteins, it binds directly near the 3'-end of the 23S rRNA, where it nucleates assembly of the 50S subunit. The protein is Large ribosomal subunit protein uL3 of Limosilactobacillus fermentum (strain NBRC 3956 / LMG 18251) (Lactobacillus fermentum).